The sequence spans 350 residues: UDP-glucose 4-epimerase 2 (350 aa).

NAD(+) is bound by residues 12–14 (GYI), 33–37 (DNYDN), 63–64 (DL), phenylalanine 85, and lysine 89. Position 129 to 131 (129 to 131 (SAT)) interacts with substrate. Tyrosine 153 functions as the Proton acceptor in the catalytic mechanism. NAD(+)-binding residues include lysine 157 and tyrosine 181. Substrate-binding positions include 181–183 (YFN), 202–204 (NNL), 220–222 (TVF), arginine 235, and 297–300 (RPGD).

It belongs to the NAD(P)-dependent epimerase/dehydratase family. Forms homodimers and heterodimers. NAD(+) serves as cofactor. As to expression, widely expressed. Most highly expressed in stems and flowers.

The protein resides in the cytoplasm. The catalysed reaction is UDP-alpha-D-glucose = UDP-alpha-D-galactose. Its pathway is carbohydrate metabolism; galactose metabolism. Enhanced activity by NaCl. Enhanced activity by NAD(+). Strongly inhibited by UDP. Catalyzes the interconversion between UDP-glucose and UDP-galactose. Cooperates with UGE3 in pollen development and with UGE4 in cell wall carbohydrate biosynthesis and growth. The sequence is that of UDP-glucose 4-epimerase 2 from Arabidopsis thaliana (Mouse-ear cress).